The primary structure comprises 492 residues: AAA-ATPase At3g28520 (492 aa).

The helical transmembrane segment at 7 to 25 (IWGFTSTTMASIMFLWPMY) threads the bilayer. 249–256 (GPPGTGKS) is a binding site for ATP. Disordered regions lie at residues 313–334 (KKKK…LKRV) and 462–492 (KIEK…MVTK). 2 stretches are compositionally biased toward basic and acidic residues: residues 323–332 (EEKKEAENLK) and 462–484 (KIEK…EKQN).

Belongs to the AAA ATPase family. BCS1 subfamily. Requires Mg(2+) as cofactor.

It localises to the membrane. It carries out the reaction ATP + H2O = ADP + phosphate + H(+). The sequence is that of AAA-ATPase At3g28520 from Arabidopsis thaliana (Mouse-ear cress).